A 556-amino-acid chain; its full sequence is 3-phosphoinositide-dependent protein kinase 1 (556 aa).

Tyrosine 9 carries the post-translational modification Phosphotyrosine; by SRC and INSR. Serine 25 is modified (phosphoserine). The tract at residues 26–80 (PSMVRTQTESSTPPGIPGGSRQGPAMDGTAAEPRPGAGSLQHAQPPPQPRKKRPE) is disordered. Positions 28-38 (MVRTQTESSTP) are enriched in polar residues. A Protein kinase domain is found at 82–342 (FKFGKILGEG…YGPLKAHPFF (261 aa)). Residues 92-94 (SFS) and lysine 111 contribute to the ATP site. Residues 113-157 (LEKRHIIKENKVPYVTRERDVMSRLDHPFFVKLYFTFQDDEKLYF) form a PIF-pocket region. ATP is bound by residues 160 to 162 (SYA) and glutamate 166. Aspartate 205 (proton acceptor) is an active-site residue. The ATP site is built by glutamate 209 and aspartate 223. Serine 241 carries the post-translational modification Phosphoserine; by autocatalysis. Lysine 304 carries the N6-acetyllysine modification. Phosphothreonine; by MELK is present on threonine 354. 2 positions are modified to phosphotyrosine; by SRC and INSR: tyrosine 373 and tyrosine 376. Serine 393 is modified (phosphoserine). Serine 394 carries the phosphoserine; by MAP3K5 modification. Serine 396 bears the Phosphoserine mark. Serine 398 carries the post-translational modification Phosphoserine; by MAP3K5. Phosphoserine is present on serine 410. A PH domain is found at 459-550 (KMGPVDKRKG…EVWRQRYQSH (92 aa)). Position 501 is a phosphoserine; by PKC/PRKCQ (serine 501). A Phosphothreonine; by autocatalysis modification is found at threonine 513. Serine 529 carries the post-translational modification Phosphoserine; by PKC/PRKCQ.

This sequence belongs to the protein kinase superfamily. AGC Ser/Thr protein kinase family. PDPK1 subfamily. In terms of assembly, homodimer in its autoinhibited state. Active as monomer. Interacts with NPRL2, PPARG, PAK1, PTK2B, GRB14, PKN1 (via C-terminus), STRAP and IKKB. The Tyr-9 phosphorylated form interacts with SRC, RASA1 and CRK (via their SH2 domains). Interacts with SGK3 in a phosphorylation-dependent manner. The tyrosine-phosphorylated form interacts with PTPN6. The Ser-241 phosphorylated form interacts with YWHAH and YWHAQ. Binds INSR in response to insulin. Interacts (via PH domain) with SMAD3, SMAD4 and SMAD7. Interacts with PKN2; the interaction stimulates PDPK1 autophosphorylation, its PI(3,4,5)P3-dependent kinase activity toward 'Ser-473' of AKT1 but also activates its kinase activity toward PRKCD and PRKCZ. Post-translationally, phosphorylation on Ser-241 in the activation loop is required for full activity. PDPK1 itself can autophosphorylate Ser-241, leading to its own activation. Autophosphorylation is inhibited by the apoptotic C-terminus cleavage product of PKN2. Tyr-9 phosphorylation is critical for stabilization of both PDPK1 and the PDPK1/SRC complex via HSP90-mediated protection of PDPK1 degradation. Angiotensin II stimulates the tyrosine phosphorylation of PDPK1 in vascular smooth muscle in a calcium- and SRC-dependent manner. Phosphorylated on Tyr-9, Tyr-373 and Tyr-376 by INSR in response to insulin. Palmitate negatively regulates autophosphorylation at Ser-241 and palmitate-induced phosphorylation at Ser-529 and Ser-501 by PKC/PRKCQ negatively regulates its ability to phosphorylate PKB/AKT1. Phosphorylation at Thr-354 by MELK partially inhibits kinase activity, the inhibition is cooperatively enhanced by phosphorylation at Ser-394 and Ser-398 by MAP3K5. Autophosphorylated; autophosphorylation is inhibited by the apoptotic C-terminus cleavage product of PKN2. In terms of processing, monoubiquitinated in the kinase domain, deubiquitinated by USP4. Appears to be expressed ubiquitously. The Tyr-9 phosphorylated form is markedly increased in diseased tissue compared with normal tissue from lung, liver, colon and breast.

It is found in the cytoplasm. It localises to the nucleus. The protein resides in the cell membrane. Its subcellular location is the cell junction. The protein localises to the focal adhesion. The catalysed reaction is L-seryl-[protein] + ATP = O-phospho-L-seryl-[protein] + ADP + H(+). It catalyses the reaction L-threonyl-[protein] + ATP = O-phospho-L-threonyl-[protein] + ADP + H(+). With respect to regulation, homodimerization regulates its activity by maintaining the kinase in an autoinhibitory conformation. NPRL2 down-regulates its activity by interfering with tyrosine phosphorylation at the Tyr-9, Tyr-373 and Tyr-376 residues. The 14-3-3 protein YWHAQ acts as a negative regulator by association with the residues surrounding the Ser-241 residue. STRAP positively regulates its activity by enhancing its autophosphorylation and by stimulating its dissociation from YWHAQ. SMAD2, SMAD3, SMAD4 and SMAD7 also positively regulate its activity by stimulating its dissociation from YWHAQ. Activated by phosphorylation on Tyr-9, Tyr-373 and Tyr-376 by INSR in response to insulin. Serine/threonine kinase which acts as a master kinase, phosphorylating and activating a subgroup of the AGC family of protein kinases. Its targets include: protein kinase B (PKB/AKT1, PKB/AKT2, PKB/AKT3), p70 ribosomal protein S6 kinase (RPS6KB1), p90 ribosomal protein S6 kinase (RPS6KA1, RPS6KA2 and RPS6KA3), cyclic AMP-dependent protein kinase (PRKACA), protein kinase C (PRKCD and PRKCZ), serum and glucocorticoid-inducible kinase (SGK1, SGK2 and SGK3), p21-activated kinase-1 (PAK1), TSSK3, protein kinase PKN (PKN1 and PKN2). Plays a central role in the transduction of signals from insulin by providing the activating phosphorylation to PKB/AKT1, thus propagating the signal to downstream targets controlling cell proliferation and survival, as well as glucose and amino acid uptake and storage. Negatively regulates the TGF-beta-induced signaling by: modulating the association of SMAD3 and SMAD7 with TGF-beta receptor, phosphorylating SMAD2, SMAD3, SMAD4 and SMAD7, preventing the nuclear translocation of SMAD3 and SMAD4 and the translocation of SMAD7 from the nucleus to the cytoplasm in response to TGF-beta. Activates PPARG transcriptional activity and promotes adipocyte differentiation. Activates the NF-kappa-B pathway via phosphorylation of IKKB. The tyrosine phosphorylated form is crucial for the regulation of focal adhesions by angiotensin II. Controls proliferation, survival, and growth of developing pancreatic cells. Participates in the regulation of Ca(2+) entry and Ca(2+)-activated K(+) channels of mast cells. Essential for the motility of vascular endothelial cells (ECs) and is involved in the regulation of their chemotaxis. Plays a critical role in cardiac homeostasis by serving as a dual effector for cell survival and beta-adrenergic response. Plays an important role during thymocyte development by regulating the expression of key nutrient receptors on the surface of pre-T cells and mediating Notch-induced cell growth and proliferative responses. Provides negative feedback inhibition to toll-like receptor-mediated NF-kappa-B activation in macrophages. Its function is as follows. Catalytically inactive. This is 3-phosphoinositide-dependent protein kinase 1 (PDPK1) from Homo sapiens (Human).